A 201-amino-acid chain; its full sequence is FMN-dependent NADH:quinone oxidoreductase (201 aa).

FMN-binding positions include serine 10, 16-18 (SQS), 96-99 (MYNF), and 140-143 (SRGG).

This sequence belongs to the azoreductase type 1 family. As to quaternary structure, homodimer. It depends on FMN as a cofactor.

The enzyme catalyses 2 a quinone + NADH + H(+) = 2 a 1,4-benzosemiquinone + NAD(+). It carries out the reaction N,N-dimethyl-1,4-phenylenediamine + anthranilate + 2 NAD(+) = 2-(4-dimethylaminophenyl)diazenylbenzoate + 2 NADH + 2 H(+). Quinone reductase that provides resistance to thiol-specific stress caused by electrophilic quinones. Functionally, also exhibits azoreductase activity. Catalyzes the reductive cleavage of the azo bond in aromatic azo compounds to the corresponding amines. The polypeptide is FMN-dependent NADH:quinone oxidoreductase (Cronobacter sakazakii (strain ATCC BAA-894) (Enterobacter sakazakii)).